The sequence spans 143 residues: MGMVSEFKQFAMRGNVIDLAVGVVIGAAFGKIVTALVEKIIMPPIGWAIGNVDFSRLAWVLKPAGVDATGKEIPAVVIGYGDFINTVVQFVIIAFAIFLVVKLINRLSQRKPDAPKGPSEEVLLLREIRDSLKNDTLKNPTVP.

2 helical membrane passes run 16-36 and 84-104; these read VIDL…VTAL and INTV…VKLI.

It belongs to the MscL family. Homopentamer.

Its subcellular location is the cell inner membrane. In terms of biological role, channel that opens in response to stretch forces in the membrane lipid bilayer. May participate in the regulation of osmotic pressure changes within the cell. The protein is Large-conductance mechanosensitive channel of Xanthomonas campestris pv. campestris (strain 8004).